A 956-amino-acid chain; its full sequence is Pollen-specific leucine-rich repeat extensin-like protein 1 (956 aa).

The N-terminal stretch at 1–30 (MTRRTMEKPFGCFLLLFCFTISIFFYSAAA) is a signal peptide. LRR repeat units lie at residues 39–59 (LTRRQLLALSENGDLPDDIEY), 60–84 (EVDLDLKFANNRLKRAYIALQAWKK), 119–143 (VLVVAGIDLNHADIAGYLPPELGLL), 144–166 (TDVALFHVNSNRFCGVIPKSLSK), 168–191 (TLMYEFDVSNNRFVGPFPTVALSW), 192–215 (PSLKFLDIRYNDFEGKLPPEIFDK), 217–238 (LDAIFLNNNRFESTIPETIGKS), 240–261 (ASVVTFAHNKFSGCIPKTIGQM), 262–285 (KNLNEIVFIGNNLSGCLPNEIGSL), 287–309 (NVTVFDASSNGFVGSLPSTLSGL), and 310–332 (ANVEQMDFSYNKFTGFVTDNICK). Asn273 and Asn287 each carry an N-linked (GlcNAc...) asparagine glycan. An N-linked (GlcNAc...) asparagine glycan is attached at Asn338. Over residues 355 to 377 (PGSSQEKQFDDTSNCLQNRPNQK) the composition is skewed to polar residues. Disordered regions lie at residues 355-380 (PGSSQEKQFDDTSNCLQNRPNQKSAK) and 397-956 (CAGG…FPGY). Over residues 408-417 (SPKPTPTPKA) the composition is skewed to pro residues. Composition is skewed to basic and acidic residues over residues 431–441 (EPSKPKPEESP) and 452–534 (TPSH…EESP). Pro residues predominate over residues 640–830 (QSPPVHSPPP…KPVTPLPPAT (191 aa)). A contains the Ser-Pro(4) repeats region spans residues 651–956 (PPVHSPPPPV…SPPPPMFPGY (306 aa)). Residues 837-852 (PTPSSSESGEISTPVQ) show a composition bias toward polar residues. Positions 947–956 (SPPPPMFPGY) are enriched in pro residues.

Post-translationally, hydroxylated on proline residues in the S-P-P-P-P repeat. In terms of processing, O-glycosylated on hydroxyprolines. In terms of tissue distribution, expressed in flowers, stamen, pollen, and pollinated carpels.

It is found in the secreted. It localises to the cell wall. Modulates cell morphogenesis by regulating cell wall formation and assembly, and/or growth polarization. The polypeptide is Pollen-specific leucine-rich repeat extensin-like protein 1 (PEX1) (Arabidopsis thaliana (Mouse-ear cress)).